Consider the following 240-residue polypeptide: Octanoyltransferase (240 aa).

Positions 1–22 (MGTTGTNDGATTPPANTSTPAV) are disordered. A compositionally biased stretch (low complexity) spans 10 to 21 (ATTPPANTSTPA). The region spanning 51 to 236 (EKIPDTILLL…NLVDALNGDL (186 aa)) is the BPL/LPL catalytic domain. Residues 89–96 (RGGRITWH), 166–168 (AIG), and 179–181 (GVA) contribute to the substrate site. The active-site Acyl-thioester intermediate is the Cys197.

It belongs to the LipB family.

The protein localises to the cytoplasm. The enzyme catalyses octanoyl-[ACP] + L-lysyl-[protein] = N(6)-octanoyl-L-lysyl-[protein] + holo-[ACP] + H(+). The protein operates within protein modification; protein lipoylation via endogenous pathway; protein N(6)-(lipoyl)lysine from octanoyl-[acyl-carrier-protein]: step 1/2. In terms of biological role, catalyzes the transfer of endogenously produced octanoic acid from octanoyl-acyl-carrier-protein onto the lipoyl domains of lipoate-dependent enzymes. Lipoyl-ACP can also act as a substrate although octanoyl-ACP is likely to be the physiological substrate. This is Octanoyltransferase from Corynebacterium jeikeium (strain K411).